The sequence spans 135 residues: Ribosomal RNA large subunit methyltransferase H (135 aa).

S-adenosyl-L-methionine-binding positions include Leu52, Gly83, and 102 to 107 (LSSLTL).

This sequence belongs to the RNA methyltransferase RlmH family. As to quaternary structure, homodimer.

It localises to the cytoplasm. The catalysed reaction is pseudouridine(1915) in 23S rRNA + S-adenosyl-L-methionine = N(3)-methylpseudouridine(1915) in 23S rRNA + S-adenosyl-L-homocysteine + H(+). In terms of biological role, specifically methylates the pseudouridine at position 1915 (m3Psi1915) in 23S rRNA. In Polynucleobacter necessarius subsp. necessarius (strain STIR1), this protein is Ribosomal RNA large subunit methyltransferase H.